The primary structure comprises 395 residues: Putative phosphatidate cytidylyltransferase (395 aa).

The next 9 membrane-spanning stretches (helical) occupy residues 13–33, 78–98, 115–135, 144–164, 177–197, 201–221, 242–262, 306–326, and 358–378; these read STVF…SAFA, FAFG…MNWE, SLLS…VIYF, WIWT…YMIS, IYSL…YFSV, WTTI…AYLF, AFFG…LYSI, FYIY…IFAI, and FDSS…AGIS.

It belongs to the CDS family.

It localises to the cell membrane. The enzyme catalyses a 1,2-diacyl-sn-glycero-3-phosphate + CTP + H(+) = a CDP-1,2-diacyl-sn-glycerol + diphosphate. It functions in the pathway phospholipid metabolism; CDP-diacylglycerol biosynthesis; CDP-diacylglycerol from sn-glycerol 3-phosphate: step 3/3. In Mycoplasma pneumoniae (strain ATCC 29342 / M129 / Subtype 1) (Mycoplasmoides pneumoniae), this protein is Putative phosphatidate cytidylyltransferase (cdsA).